The primary structure comprises 319 residues: Acetyl-coenzyme A carboxylase carboxyl transferase subunit alpha (319 aa).

Residues asparagine 32–threonine 293 form the CoA carboxyltransferase C-terminal domain.

It belongs to the AccA family. In terms of assembly, acetyl-CoA carboxylase is a heterohexamer composed of biotin carboxyl carrier protein (AccB), biotin carboxylase (AccC) and two subunits each of ACCase subunit alpha (AccA) and ACCase subunit beta (AccD).

Its subcellular location is the cytoplasm. It carries out the reaction N(6)-carboxybiotinyl-L-lysyl-[protein] + acetyl-CoA = N(6)-biotinyl-L-lysyl-[protein] + malonyl-CoA. Its pathway is lipid metabolism; malonyl-CoA biosynthesis; malonyl-CoA from acetyl-CoA: step 1/1. Its function is as follows. Component of the acetyl coenzyme A carboxylase (ACC) complex. First, biotin carboxylase catalyzes the carboxylation of biotin on its carrier protein (BCCP) and then the CO(2) group is transferred by the carboxyltransferase to acetyl-CoA to form malonyl-CoA. The polypeptide is Acetyl-coenzyme A carboxylase carboxyl transferase subunit alpha (Thioalkalivibrio sulfidiphilus (strain HL-EbGR7)).